Here is a 1102-residue protein sequence, read N- to C-terminus: Probable DNA-directed RNA polymerase (1102 aa).

Active-site residues include aspartate 734, lysine 804, and aspartate 980.

The protein belongs to the phage and mitochondrial RNA polymerase family.

Its subcellular location is the mitochondrion. The catalysed reaction is RNA(n) + a ribonucleoside 5'-triphosphate = RNA(n+1) + diphosphate. DNA-dependent RNA polymerase catalyzes the transcription of DNA into RNA using the four ribonucleoside triphosphates as substrates. This Agaricus bitorquis (Pavement mushroom) protein is Probable DNA-directed RNA polymerase.